A 715-amino-acid polypeptide reads, in one-letter code: Protein psiH (715 aa).

Positions 1–20 (MNYLKPTIFLILCLVTFVYS) are cleaved as a signal peptide. At 21–651 (QPSTLTIQGT…ICKTGAVVST (631 aa)) the chain is on the extracellular side. A PA14 domain is found at 115–256 (NYDSKKQVYV…YDYCGVCSGD (142 aa)). N-linked (GlcNAc...) asparagine glycans are attached at residues N149, N377, N528, and N622. Residues 652–672 (AVIAGVTVAGAVALGVFIYGG) form a helical membrane-spanning segment. Residues 673–715 (KRGYDYWKESRNVQFSGSNSNPLYEQNPNGSGVNPLYNDNSAL) lie on the Cytoplasmic side of the membrane. The interval 690–715 (SNSNPLYEQNPNGSGVNPLYNDNSAL) is disordered.

This sequence belongs to the prespore-cell-inducing factor family.

It is found in the membrane. The chain is Protein psiH (psiH) from Dictyostelium discoideum (Social amoeba).